The primary structure comprises 764 residues: Dehydrocurvularin biosynthesis regulator (764 aa).

Positions 28–59 (CWECKRRKMKCIFDPRITSTSCNGCRQRGSPC) form a DNA-binding region, zn(2)-C6 fungal-type. Disordered stretches follow at residues 73–94 (HGANDSASLDASTPIATPSDDA), 112–136 (YRYLPSSKSSDKRFTTRSSNDASTC), and 633–672 (FPTSINTNSDPVHVHSQADFPSSTQLSSSSHPNTPSPALS). Over residues 77 to 88 (DSASLDASTPIA) the composition is skewed to polar residues. The span at 663–672 (HPNTPSPALS) shows a compositional bias: polar residues.

Its subcellular location is the nucleus. In terms of biological role, transcription factor involved in regulation of the dehydrocurvularin biosynthesis gene cluster. The protein is Dehydrocurvularin biosynthesis regulator of Alternaria cinerariae.